A 334-amino-acid polypeptide reads, in one-letter code: Ferredoxin--NADP reductase (334 aa).

The FAD site is built by aspartate 33, glutamine 41, tyrosine 46, alanine 86, phenylalanine 120, aspartate 286, and threonine 327.

It belongs to the ferredoxin--NADP reductase type 2 family. As to quaternary structure, homodimer. The cofactor is FAD.

It catalyses the reaction 2 reduced [2Fe-2S]-[ferredoxin] + NADP(+) + H(+) = 2 oxidized [2Fe-2S]-[ferredoxin] + NADPH. The protein is Ferredoxin--NADP reductase of Rickettsia akari (strain Hartford).